Here is an 867-residue protein sequence, read N- to C-terminus: V-set and immunoglobulin domain-containing protein 10-like (867 aa).

The first 27 residues, 1-27 (MDNPQALPLFLLLASLVGILTLRASSG), serve as a signal peptide directing secretion. The Extracellular portion of the chain corresponds to 28–776 (LQQTNFSSAF…RAGPTLSHGA (749 aa)). An N-linked (GlcNAc...) asparagine glycan is attached at N32. The span at 35 to 45 (SAFSSDSKSSS) shows a compositional bias: low complexity. The tract at residues 35–60 (SAFSSDSKSSSQGLGVEVPSIKPPSW) is disordered. Residues N88, N96, and N144 are each glycosylated (N-linked (GlcNAc...) asparagine). The segment at 104–186 (LSPVSPFSET…PESKFSAETH (83 aa)) is disordered. A compositionally biased stretch (polar residues) spans 137–153 (TVKTPASNISTQVSHTK). Basic and acidic residues predominate over residues 159 to 170 (PDSKFSPDDMDL). The segment covering 173-186 (SAQSPESKFSAETH) has biased composition (polar residues). Ig-like C2-type domains lie at 302–394 (PQLS…ADVS) and 402–487 (PTIT…SLLN). The cysteines at positions 324 and 378 are disulfide-linked. N423 carries N-linked (GlcNAc...) asparagine glycosylation. C428 and C471 are disulfide-bonded. N487 carries an N-linked (GlcNAc...) asparagine glycan. The segment at 602-627 (ASGCPPPSRASWAREGRPLAPGGGSR) is disordered. N-linked (GlcNAc...) asparagine glycosylation is found at N641 and N650. The chain crosses the membrane as a helical span at residues 777 to 797 (IAGIVLGSLLGLALLAVLLLL). The Cytoplasmic portion of the chain corresponds to 798-867 (CICCLCRFRG…QAQTPVQLSL (70 aa)).

Expressed in the esophagus, particularly in the suprabasilar layers of the epithelium. Expression is largely reduced in esophageal metaplasia, dysplasia, and adenocarcinoma lesions.

The protein localises to the membrane. The polypeptide is V-set and immunoglobulin domain-containing protein 10-like (VSIG10L) (Homo sapiens (Human)).